The sequence spans 401 residues: Tumor necrosis factor receptor superfamily member 11B (401 aa).

The signal sequence occupies residues 1 to 21 (MNKWLCCALLVLLDIIEWTTQ). TNFR-Cys repeat units lie at residues 24-62 (LPPK…KTLC), 65-105 (CPDH…NRVC), 107-142 (CEEG…NTVC), and 145-185 (CPDG…DNVC). Disulfide bonds link C41/C54, C44/C62, C65/C80, C83/C97, C87/C105, C107/C118, C124/C142, and C145/C160. Residue N98 is glycosylated (N-linked (GlcNAc...) asparagine). N165 and N178 each carry an N-linked (GlcNAc...) asparagine glycan. A disulfide bridge connects residues C166 and C185. 2 Death domains span residues 198–269 (DVTL…MVKK) and 283–365 (RHLG…THSL). A glycan (N-linked (GlcNAc...) asparagine) is linked at N289.

In terms of assembly, homodimer. Interacts with TNFSF10 and TNFSF11. As to expression, highly expressed in liver, lung, stomach, intestines and calvaria. Highly expressed in decidua and placenta, and in embryo.

It is found in the secreted. In terms of biological role, acts as a decoy receptor for TNFSF11/RANKL and thereby neutralizes its function in osteoclastogenesis. Inhibits the activation of osteoclasts and promotes osteoclast apoptosis in vitro. Bone homeostasis seems to depend on the local ratio between TNFSF11 and TNFRSF11B. May also play a role in preventing arterial calcification. May act as decoy receptor for TNFSF10/TRAIL and protect against apoptosis. TNFSF10/TRAIL binding blocks the inhibition of osteoclastogenesis. The polypeptide is Tumor necrosis factor receptor superfamily member 11B (Tnfrsf11b) (Mus musculus (Mouse)).